The chain runs to 376 residues: MVATGRIIITLLAAALDEIILASKITQEAYDSDFSSPRYALTGSLAESVYGKQCYGDCVNYTCVVSRTGSLDPCLYTTKSIRIVHPAAKVLQKRETFCRSACITDDTVPWCIIDRYGTVDLCEPIKPNRKQPSLAVELSVDGKHPTGRTTTCSTRCKYRPSNEGSIGHRCVVRNGMNYAEWACSPNPVIMPPAIPTYNNAGSLDGLTECNLKTGLRIGLTIGDNEYSDSTNVSSGIAVLDYDGAVISIMTAYKQYITYVDAKEKPLTTLGILNTADDVGTKMVVYAMARVTAESVESLHKSLLNVLGDYSLPNGFGRFQRGLSGWLIGGHKYRNIEIKMLIHRRENNTEVEAISVDLKFRHGRYRLMNSCKGLIIL.

An N-terminal signal peptide occupies residues 1–22; it reads MVATGRIIITLLAAALDEIILA.

The protein belongs to the ascovirus HvAV ORF17 family.

This is an uncharacterized protein from Heliothis virescens ascovirus 3e (HvAV-3e).